The following is a 188-amino-acid chain: Ion-translocating oxidoreductase complex subunit B (188 aa).

The interval 1 to 23 is hydrophobic; that stretch reads MFTAIWVMVGLAIAIGLILGWSA. The 4Fe-4S domain maps to 29-88; the sequence is EGNPLAEKIDAILPQTQCGQCGFPGCRPYAEAIAKGEADINQCPPGGEEGVKKLAELLGV. The [4Fe-4S] cluster site is built by C46, C49, C54, C71, C113, C116, C119, C123, C143, C146, C149, and C153. 4Fe-4S ferredoxin-type domains follow at residues 104–133 and 134–163; these read SVAF…GAAK and QMHT…MVPI.

It belongs to the 4Fe4S bacterial-type ferredoxin family. RnfB subfamily. The complex is composed of six subunits: RnfA, RnfB, RnfC, RnfD, RnfE and RnfG. [4Fe-4S] cluster is required as a cofactor.

It is found in the cell inner membrane. In terms of biological role, part of a membrane-bound complex that couples electron transfer with translocation of ions across the membrane. This Thiobacillus denitrificans (strain ATCC 25259 / T1) protein is Ion-translocating oxidoreductase complex subunit B.